We begin with the raw amino-acid sequence, 1209 residues long: Zinc finger protein 804A (1209 aa).

Residues 57-81 (FYCELCDKQYYKHQEFDNHINSYDH) form a C2H2-type zinc finger. The span at 380-394 (VKHNEASTTEVENKN) shows a compositional bias: basic and acidic residues. 2 disordered regions span residues 380–401 (VKHN…TLAP) and 792–860 (PEEF…MKPQ). Residues 807–819 (KPKKKRRRKRGRF) are compositionally biased toward basic residues. 2 stretches are compositionally biased toward basic and acidic residues: residues 826–836 (LELKENTDYPV) and 848–860 (LISE…MKPQ).

The protein is Zinc finger protein 804A (ZNF804A) of Homo sapiens (Human).